The following is a 376-amino-acid chain: TATA box-binding protein-like 2 (376 aa).

The segment at 103-184 is disordered; sequence PDEVTQENKD…SDSLSLASIT (82 aa). Basic and acidic residues predominate over residues 108–122; sequence QENKDQPVISKHETE. Low complexity predominate over residues 126–159; that stretch reads ESQSPQSRLPSPSEQDVGLGLNSSSLSNSHSQLH. A compositionally biased stretch (polar residues) spans 175–184; sequence SDSLSLASIT.

The protein belongs to the TBP family. Interacts with TAF3.

Its subcellular location is the cytoplasm. The protein resides in the nucleus. Its function is as follows. Transcription factor required in complex with TAF3 for the differentiation of myoblasts into myocytes. The complex replaces TFIID at specific promoters at an early stage in the differentiation process. The chain is TATA box-binding protein-like 2 from Pan troglodytes (Chimpanzee).